Here is a 210-residue protein sequence, read N- to C-terminus: MYENVFVIDHPLIQHKISLIRDENTGSKEFRELVGEIAMLMAYEVTRDLPLEEIEVKTPIAVAKTKVIAGKKLGIIPILRAGLVMADGMLKLIPTAKVGHIGIYRDPETLKPVEYYCKLPSDIAERDLIVVDPMLATGGSASAAIHFLKERGAQSIKLVNLIAAPEGIKAVHKDHPEVPIYVASIDQGLNEHGYIVPGLGDAGDRLFGTK.

5-phospho-alpha-D-ribose 1-diphosphate contacts are provided by residues R80, R105, and D132–S140. Residues I195 and G200–A202 each bind uracil. D201 is a binding site for 5-phospho-alpha-D-ribose 1-diphosphate.

The protein belongs to the UPRTase family. The cofactor is Mg(2+).

The enzyme catalyses UMP + diphosphate = 5-phospho-alpha-D-ribose 1-diphosphate + uracil. Its pathway is pyrimidine metabolism; UMP biosynthesis via salvage pathway; UMP from uracil: step 1/1. With respect to regulation, allosterically activated by GTP. Catalyzes the conversion of uracil and 5-phospho-alpha-D-ribose 1-diphosphate (PRPP) to UMP and diphosphate. In Caldanaerobacter subterraneus subsp. tengcongensis (strain DSM 15242 / JCM 11007 / NBRC 100824 / MB4) (Thermoanaerobacter tengcongensis), this protein is Uracil phosphoribosyltransferase.